The following is a 151-amino-acid chain: Probable ubiquitin-conjugating enzyme E2 W-A (151 aa).

A UBC core domain is found at 3-151 (SMQKRLQKEL…TKWWYHDDTC (149 aa)). Residue Cys-91 is the Glycyl thioester intermediate of the active site.

Belongs to the ubiquitin-conjugating enzyme family.

The protein localises to the nucleus. It catalyses the reaction S-ubiquitinyl-[E1 ubiquitin-activating enzyme]-L-cysteine + [E2 ubiquitin-conjugating enzyme]-L-cysteine = [E1 ubiquitin-activating enzyme]-L-cysteine + S-ubiquitinyl-[E2 ubiquitin-conjugating enzyme]-L-cysteine.. The catalysed reaction is S-ubiquitinyl-[E1 ubiquitin-activating enzyme]-L-cysteine + [acceptor protein]-N-terminal-amino acid = [E1 ubiquitin-activating enzyme]-L-cysteine + N-terminal-ubiquitinyl-[acceptor protein].. It functions in the pathway protein modification; protein ubiquitination. In terms of biological role, accepts ubiquitin from the E1 complex and catalyzes its covalent attachment to other proteins. Catalyzes monoubiquitination. Involved in degradation of misfolded chaperone substrate and DNA repair. This is Probable ubiquitin-conjugating enzyme E2 W-A (ube2wa) from Danio rerio (Zebrafish).